The primary structure comprises 82 residues: Small ribosomal subunit protein bS16 (82 aa).

Belongs to the bacterial ribosomal protein bS16 family.

This Blochmanniella floridana protein is Small ribosomal subunit protein bS16.